Consider the following 588-residue polypeptide: DNA mismatch repair protein MutL (588 aa).

Belongs to the DNA mismatch repair MutL/HexB family.

In terms of biological role, this protein is involved in the repair of mismatches in DNA. It is required for dam-dependent methyl-directed DNA mismatch repair. May act as a 'molecular matchmaker', a protein that promotes the formation of a stable complex between two or more DNA-binding proteins in an ATP-dependent manner without itself being part of a final effector complex. The chain is DNA mismatch repair protein MutL from Fervidobacterium nodosum (strain ATCC 35602 / DSM 5306 / Rt17-B1).